The sequence spans 131 residues: Peptide methionine sulfoxide reductase MsrB (131 aa).

In terms of domain architecture, MsrB spans 8–130 (LDEWRSMLDP…NSVCIDLRPR (123 aa)). Zn(2+) is bound by residues C47, C50, C96, and C99. C119 (nucleophile) is an active-site residue.

Belongs to the MsrB Met sulfoxide reductase family. Zn(2+) serves as cofactor.

The catalysed reaction is L-methionyl-[protein] + [thioredoxin]-disulfide + H2O = L-methionyl-(R)-S-oxide-[protein] + [thioredoxin]-dithiol. In Pseudomonas putida (strain ATCC 47054 / DSM 6125 / CFBP 8728 / NCIMB 11950 / KT2440), this protein is Peptide methionine sulfoxide reductase MsrB.